A 462-amino-acid chain; its full sequence is Gastric inhibitory polypeptide receptor (462 aa).

A signal peptide spans 1–18; that stretch reads MPLRPRLLLLCLWGLLLQ. Residues 19–135 are Extracellular-facing; it reads QAETDSEGQT…DQRLILERLQ (117 aa). 3 disulfide bridges follow: Cys-43/Cys-67, Cys-58/Cys-100, and Cys-81/Cys-115. Asn-59 and Asn-74 each carry an N-linked (GlcNAc...) asparagine glycan. The helical transmembrane segment at 136 to 158 threads the bilayer; that stretch reads VVYTVGYSLSLGTLLLALLILSL. The Cytoplasmic segment spans residues 159-166; sequence FRRLHCTR. The helical transmembrane segment at 167–186 threads the bilayer; the sequence is NYIHMNVFLSFMLRAVAILT. Residues 187–214 are Extracellular-facing; the sequence is RDRLLPTLGPYPGDRTLTLRNQALAACR. Residues 215 to 239 form a helical membrane-spanning segment; it reads TAQIVTQYCVGANYTWLLVEGVYLH. Over 240–251 the chain is Cytoplasmic; sequence HLLVIVGGSEKG. A helical transmembrane segment spans residues 252–275; sequence HFRCYLLLGWGAPALFVIPWVIVR. Over 276-290 the chain is Extracellular; it reads YLLENTQCWERNEVK. A helical transmembrane segment spans residues 291 to 316; it reads AIWWIIRTPILITILINFFIFIRILG. Over 317–338 the chain is Cytoplasmic; it reads ILVSKLRTRQMRCPDYRLRLAR. A helical membrane pass occupies residues 339 to 359; the sequence is STLTLVPLLGVHEVVFAPVTE. Residues 360 to 374 are Extracellular-facing; it reads EQAEGTLRFAKLAFE. The chain crosses the membrane as a helical span at residues 375–395; it reads IFLSSFQGFLVSVLYCFINKE. The Cytoplasmic segment spans residues 396-462; that stretch reads VQSEIRRSWR…PGEEVLESYC (67 aa). Residues 421–462 form a disordered region; sequence HAELGPQALPSRSAPREVPITGSTLPSGPLHGPGEEVLESYC.

This sequence belongs to the G-protein coupled receptor 2 family. In terms of assembly, may form homodimers and heterodimers with GLP1R. In terms of processing, N-glycosylation is required for cell surface expression and lengthens receptor half-life by preventing degradation in the ER. Widely distributed including pancreatic islets, brain and various peripheral tissues.

It is found in the cell membrane. In terms of biological role, this is a receptor for GIP. The activity of this receptor is mediated by G proteins which activate adenylyl cyclase. This chain is Gastric inhibitory polypeptide receptor (GIPR), found in Mesocricetus auratus (Golden hamster).